The sequence spans 451 residues: Probable multidrug resistance protein NorM (451 aa).

The next 12 helical transmembrane spans lie at 23–43 (GPVV…TAVI), 53–73 (AAAY…GVML), 101–121 (LALL…FVLP), 132–152 (LVAA…AFIA), 169–189 (VALT…FGWG), 194–214 (LGLA…AALL), 243–263 (WPIG…TLLM), 277–297 (TMQT…ATGV), 316–336 (LVGL…ELAA), 355–375 (LIAA…MDGL), 391–411 (VPLL…GSVL), and 422–442 (LWFG…GRFL).

This sequence belongs to the multi antimicrobial extrusion (MATE) (TC 2.A.66.1) family.

It is found in the cell membrane. Its function is as follows. Multidrug efflux pump. This is Probable multidrug resistance protein NorM (norM) from Deinococcus radiodurans (strain ATCC 13939 / DSM 20539 / JCM 16871 / CCUG 27074 / LMG 4051 / NBRC 15346 / NCIMB 9279 / VKM B-1422 / R1).